The following is a 112-amino-acid chain: Large ribosomal subunit protein uL18 (112 aa).

The protein belongs to the universal ribosomal protein uL18 family. As to quaternary structure, part of the 50S ribosomal subunit; part of the 5S rRNA/L5/L18/L25 subcomplex. Contacts the 5S and 23S rRNAs.

Its function is as follows. This is one of the proteins that bind and probably mediate the attachment of the 5S RNA into the large ribosomal subunit, where it forms part of the central protuberance. The chain is Large ribosomal subunit protein uL18 from Thermus thermophilus (strain ATCC BAA-163 / DSM 7039 / HB27).